The sequence spans 179 residues: uncharacterized protein (179 aa).

This is an uncharacterized protein from Pasteurella multocida (strain Pm70).